The primary structure comprises 245 residues: Gem-associated protein 2 (245 aa).

Belongs to the gemin-2 family. As to quaternary structure, component of the core survival motor neuron (SMN) complex composed of Smn, Gem2, Gem3, rig/Gem5 and one of 3 almost identical Gem4 paralogs encoded by Glos/Gem4a, Gem4b or Gem4c. Part of a minimal SMN complex composed of Smn and Gem2 only; this complex is active in UsnRNP assembly. The SMN complex associates with the entire set of spliceosomal snRNP Sm proteins, SmB, SmD1, SmD2, SmD3, SmE, SmF and SmG, and with the snRNP-specific proteins snRNP-U1-70K, U2A, snf/U1A and U5-116KD. Expressed in nurse cells and oocytes.

It localises to the cytoplasm. The protein resides in the U-body. Component of the survival motor neuron (SMN) complex that catalyzes the assembly of small nuclear ribonucleoproteins (snRNPs), the building blocks of the spliceosome, and thereby plays an important role in the splicing of cellular pre-mRNAs. Most spliceosomal snRNPs contain a common set of Sm proteins SNRPB, SNRPD1, SNRPD2, SNRPD3, SNRPE, SNRPF and SNRPG that assemble in a heptameric protein ring on the Sm site of the small nuclear RNA to form the core snRNP (Sm core). In the cytosol, the Sm proteins SNRPD1, SNRPD2, SNRPE, SNRPF and SNRPG (5Sm) are trapped in an inactive 6S pICln-Sm complex by the chaperone CLNS1A that controls the assembly of the core snRNP. To assemble core snRNPs, the SMN complex accepts the trapped 5Sm proteins from CLNS1A. Binding of snRNA inside 5Sm ultimately triggers eviction of the SMN complex, thereby allowing binding of SNRPD3 and SNRPB to complete assembly of the core snRNP. Within the SMN complex, GEMIN2 constrains the conformation of 5Sm, thereby promoting 5Sm binding to snRNA containing the snRNP code (a nonameric Sm site and a 3'-adjacent stem-loop), thus preventing progression of assembly until a cognate substrate is bound. Involved in adult motor function. This is Gem-associated protein 2 from Drosophila melanogaster (Fruit fly).